Consider the following 517-residue polypeptide: Maturase K (517 aa).

The protein belongs to the intron maturase 2 family. MatK subfamily.

It is found in the plastid. The protein resides in the chloroplast. Its function is as follows. Usually encoded in the trnK tRNA gene intron. Probably assists in splicing its own and other chloroplast group II introns. This chain is Maturase K, found in Veronica arvensis (Wall speedwell).